The chain runs to 92 residues: DNA-directed RNA polymerase subunit Rpo11 (92 aa).

The protein belongs to the archaeal Rpo11/eukaryotic RPB11/RPC19 RNA polymerase subunit family. As to quaternary structure, part of the RNA polymerase complex.

The protein resides in the cytoplasm. It carries out the reaction RNA(n) + a ribonucleoside 5'-triphosphate = RNA(n+1) + diphosphate. DNA-dependent RNA polymerase (RNAP) catalyzes the transcription of DNA into RNA using the four ribonucleoside triphosphates as substrates. This is DNA-directed RNA polymerase subunit Rpo11 from Saccharolobus islandicus (strain Y.N.15.51 / Yellowstone #2) (Sulfolobus islandicus).